Consider the following 109-residue polypeptide: Putative membrane protein insertion efficiency factor (109 aa).

This sequence belongs to the UPF0161 family.

The protein resides in the cell inner membrane. Functionally, could be involved in insertion of integral membrane proteins into the membrane. This Rhodopseudomonas palustris (strain BisB18) protein is Putative membrane protein insertion efficiency factor.